The sequence spans 304 residues: N-acetyl-D-glucosamine kinase (304 aa).

ATP is bound by residues 4-11 (GLDIGGTK) and 133-140 (GFGGGFVL). Residues histidine 157, cysteine 178, cysteine 180, and cysteine 185 each contribute to the Zn(2+) site.

This sequence belongs to the ROK (NagC/XylR) family. NagK subfamily.

The catalysed reaction is N-acetyl-D-glucosamine + ATP = N-acetyl-D-glucosamine 6-phosphate + ADP + H(+). It participates in cell wall biogenesis; peptidoglycan recycling. Functionally, catalyzes the phosphorylation of N-acetyl-D-glucosamine (GlcNAc) derived from cell-wall degradation, yielding GlcNAc-6-P. This Haemophilus influenzae (strain 86-028NP) protein is N-acetyl-D-glucosamine kinase.